The following is a 391-amino-acid chain: GTPase Obg (391 aa).

The Obg domain occupies 1-159; the sequence is MKFLDQAKIF…IWVWLRLKLI (159 aa). One can recognise an OBG-type G domain in the interval 160 to 327; the sequence is ADAGLIGLPN…VLRVMATHVD (168 aa). Residues 166–173, 191–195, 212–215, 279–282, and 308–310 contribute to the GTP site; these read GLPNAGKS, FTTLH, DIPG, SKID, and SAI. Mg(2+)-binding residues include S173 and T193. The disordered stretch occupies residues 352-391; sequence TGIDHGYNRPSAVVDWEDAPFDDDDDDDGDESGDKGQWTR. The span at 366–382 shows a compositional bias: acidic residues; sequence DWEDAPFDDDDDDDGDE.

Belongs to the TRAFAC class OBG-HflX-like GTPase superfamily. OBG GTPase family. Monomer. Requires Mg(2+) as cofactor.

It is found in the cytoplasm. Its function is as follows. An essential GTPase which binds GTP, GDP and possibly (p)ppGpp with moderate affinity, with high nucleotide exchange rates and a fairly low GTP hydrolysis rate. Plays a role in control of the cell cycle, stress response, ribosome biogenesis and in those bacteria that undergo differentiation, in morphogenesis control. The sequence is that of GTPase Obg from Rhodospirillum rubrum (strain ATCC 11170 / ATH 1.1.1 / DSM 467 / LMG 4362 / NCIMB 8255 / S1).